Here is a 391-residue protein sequence, read N- to C-terminus: Na(+)/H(+) antiporter NhaA (391 aa).

The next 11 membrane-spanning stretches (helical) occupy residues 14–34, 59–79, 95–115, 124–144, 154–174, 177–197, 213–233, 261–281, 292–312, 331–351, and 363–383; these read AGGI…NSPL, LIHW…GLEV, SLPT…YLIF, VGWA…MALL, VFLL…IAMF, TDLS…LVGL, LILW…GVII, FVIL…GMSL, IALG…FVAV, VAVM…LAFI, and LGIL…LSKV.

This sequence belongs to the NhaA Na(+)/H(+) (TC 2.A.33) antiporter family.

It is found in the cell inner membrane. The enzyme catalyses Na(+)(in) + 2 H(+)(out) = Na(+)(out) + 2 H(+)(in). Functionally, na(+)/H(+) antiporter that extrudes sodium in exchange for external protons. This Shewanella loihica (strain ATCC BAA-1088 / PV-4) protein is Na(+)/H(+) antiporter NhaA.